Here is a 707-residue protein sequence, read N- to C-terminus: ATP-dependent RNA helicase DHX33 (707 aa).

Residues 1–64 (MPEEAGFPPA…LAQPSASPYP (64 aa)) are disordered. The tract at residues 1-80 (MPEEAGFPPA…RRSLPIFQAR (80 aa)) is required for nucleolar location. The span at 39–49 (GSGGRGGGGGR) shows a compositional bias: gly residues. Low complexity predominate over residues 50 to 64 (RQQPPLAQPSASPYP). One can recognise a Helicase ATP-binding domain in the interval 84 to 252 (LAQLRNLDNA…FNGAPVLYLE (169 aa)). 97-104 (GETGSGKT) is a binding site for ATP. The DEAH box signature appears at 194–197 (DEAH). Residues 277-450 (SVFQIHQEAP…SVMLQLLAMK (174 aa)) enclose the Helicase C-terminal domain. The segment at 471-562 (AIAQLDLLGA…ISSEGDHMTL (92 aa)) is HA2; required for interaction with EIF3G and RPL26. Residues 547-558 (GVRKKFISSEGD) carry the Critical for rDNA-binding motif.

This sequence belongs to the DEAD box helicase family. DEAH subfamily. As to quaternary structure, interacts with UBTF. Interacts with DDX3X, EIF3G and EIF3H; the interaction is independent of RNA. Interacts (via HA2 region and Helicase C-terminal domain) with the components of the large ribosomal subunit RPL3, RPL7, RPL26 and RPL27. Interacts (via DEAH box) with NLRP3 (via NACHT domain). Binds to mRNA. Binds to double-stranded RNA (via the helicase C-terminal domain). Interacts (via the helicase C-terminal domain) with MAVS. Post-translationally, ubiquitinated, leading to its degradation by the proteasome. Deubiquitinated by USP36.

The protein localises to the nucleus. The protein resides in the nucleolus. It localises to the nucleoplasm. Its subcellular location is the cytoplasm. It is found in the inflammasome. It carries out the reaction ATP + H2O = ADP + phosphate + H(+). Its function is as follows. Implicated in nucleolar organization, ribosome biogenesis, protein synthesis and cytoplasmic dsRNA sensing. Stimulates RNA polymerase I transcription of the 47S precursor rRNA. Associates with ribosomal DNA (rDNA) loci where it is involved in POLR1A recruitment. In the cytoplasm, promotes elongation-competent 80S ribosome assembly at the late stage of mRNA translation initiation. Senses cytosolic dsRNA mediating NLRP3 inflammasome formation in macrophages and type I interferon production in myeloid dendritic cells. Required for NLRP3 activation induced by viral dsRNA and bacterial RNA. In dendritic cells, required for induction of type I interferon production induced by cytoplasmic dsRNA via the activation of MAPK and NF-kappa-B signaling pathways. The chain is ATP-dependent RNA helicase DHX33 from Homo sapiens (Human).